A 277-amino-acid polypeptide reads, in one-letter code: Venom serine protease (277 aa).

A signal peptide spans 1 to 19 (MNCGKIILLFITIIGVAKS). The region spanning 34–269 (IVNGVETEIN…FMEFIHNATI (236 aa)) is the Peptidase S1 domain. Cysteines 60 and 76 form a disulfide. His75 functions as the Charge relay system in the catalytic mechanism. N-linked (GlcNAc...) asparagine glycosylation is found at Asn84 and Asn104. Catalysis depends on Asp126, which acts as the Charge relay system. Residues Asn155 and Asn158 are each glycosylated (N-linked (GlcNAc...) asparagine). Intrachain disulfides connect Cys192–Cys207 and Cys216–Cys246. N-linked (GlcNAc...) asparagine glycosylation is present at Asn218. Ser220 acts as the Charge relay system in catalysis. A glycan (N-linked (GlcNAc...) asparagine) is linked at Asn266.

It belongs to the peptidase S1 family. In terms of tissue distribution, expressed by the venom duct.

Its subcellular location is the secreted. The sequence is that of Venom serine protease from Polistes dominula (European paper wasp).